The sequence spans 388 residues: Mannosyl-3-phosphoglycerate synthase (388 aa).

Belongs to the glycosyltransferase 2 family.

The protein resides in the cytoplasm. It catalyses the reaction (2R)-3-phosphoglycerate + GDP-alpha-D-mannose = 2-O-(alpha-D-mannosyl)-3-phosphoglycerate + GDP + H(+). Its pathway is carbohydrate biosynthesis; 2-(alpha-D-mannosyl)-D-glycerate biosynthesis; 2-(alpha-D-mannosyl)-D-glycerate from GDP-alpha-D-mannose (MPG route): step 1/2. Functionally, transfers a mannosyl group from GDP-mannose to phosphoglycerate to form mannosyl-3-phosphoglycerate (MPG). This chain is Mannosyl-3-phosphoglycerate synthase (mngA), found in Aeropyrum pernix (strain ATCC 700893 / DSM 11879 / JCM 9820 / NBRC 100138 / K1).